A 191-amino-acid polypeptide reads, in one-letter code: ATP synthase subunit b 1 (191 aa).

The helical transmembrane segment at 7-25 (RMRILCLCATTLLMAGSAL) threads the bilayer.

It belongs to the ATPase B chain family. In terms of assembly, F-type ATPases have 2 components, F(1) - the catalytic core - and F(0) - the membrane proton channel. F(1) has five subunits: alpha(3), beta(3), gamma(1), delta(1), epsilon(1). F(0) has three main subunits: a(1), b(2) and c(10-14). The alpha and beta chains form an alternating ring which encloses part of the gamma chain. F(1) is attached to F(0) by a central stalk formed by the gamma and epsilon chains, while a peripheral stalk is formed by the delta and b chains.

It localises to the cell inner membrane. Functionally, f(1)F(0) ATP synthase produces ATP from ADP in the presence of a proton or sodium gradient. F-type ATPases consist of two structural domains, F(1) containing the extramembraneous catalytic core and F(0) containing the membrane proton channel, linked together by a central stalk and a peripheral stalk. During catalysis, ATP synthesis in the catalytic domain of F(1) is coupled via a rotary mechanism of the central stalk subunits to proton translocation. Component of the F(0) channel, it forms part of the peripheral stalk, linking F(1) to F(0). This chain is ATP synthase subunit b 1, found in Syntrophotalea carbinolica (strain DSM 2380 / NBRC 103641 / GraBd1) (Pelobacter carbinolicus).